A 1581-amino-acid polypeptide reads, in one-letter code: Rho guanine nucleotide exchange factor 5 (1581 aa).

6 disordered regions span residues 25-54 (EGIM…TDGH), 159-274 (VSKE…EQKQ), 316-643 (LRDS…RDGI), 659-700 (SEEF…PPTV), 741-810 (HSHP…PEFY), and 829-1051 (VPII…GSSD). The span at 41–54 (QEDRDPSYKWTDGH) shows a compositional bias: basic and acidic residues. The segment covering 204 to 221 (KQLQLEATQENQGQEGFL) has biased composition (polar residues). A compositionally biased stretch (acidic residues) spans 228–241 (GLEEQEGQEVEIQE). Basic and acidic residues-rich tracts occupy residues 326–336 (QESREVEERRV) and 345–380 (RLVE…DSGD). Ser-446 carries the phosphoserine modification. The span at 474–492 (LDNRTHNSQQEEFRLRKGI) shows a compositional bias: basic and acidic residues. A compositionally biased stretch (polar residues) spans 496 to 507 (SASTSVAPSGTR). Residues 515–531 (PNVFSSTATLSPVSSSV) are compositionally biased toward low complexity. Composition is skewed to polar residues over residues 569–595 (TSDT…NSFP), 603–613 (TPDSLGMSLSF), 662–685 (FTSN…QNSA), 748–760 (TLSS…SKGS), and 779–791 (TPES…TSIP). Pro residues predominate over residues 829–843 (VPIIDPSSEPPPLPP). Composition is skewed to polar residues over residues 867-881 (PNNQ…SVGR), 889-905 (GRST…NNEV), and 912-925 (SNMT…SPTT). Residues Ser-953 and Ser-969 each carry the phosphoserine modification. Residues 975-986 (KNSEKPLHHQLE) are compositionally biased toward basic and acidic residues. Ser-1029 and Ser-1110 each carry phosphoserine. The 185-residue stretch at 1158-1342 (KLQEAKFELI…EKLIRDCNSN (185 aa)) folds into the DH domain. The 114-residue stretch at 1375–1488 (LVKSGELTAL…SALAMPREEL (114 aa)) folds into the PH domain. Residues 1494 to 1555 (YDSPQVQCLR…PVQQVEFISN (62 aa)) enclose the SH3 domain.

As to quaternary structure, interacts with SRC. Forms a ternary complex with SRC and the PI3K 85 kDa subunit. Interacts with and is activated by the heterodimer formed by GNB1 and GNG2. Interacts with ODAM (via C-terminus). Interacts with RHOA. Post-translationally, activation of SRC induces tyrosine phosphorylation of ARHGEF5.

The protein resides in the nucleus. The protein localises to the cytoplasm. Its subcellular location is the cell projection. It is found in the podosome. In terms of biological role, guanine nucleotide exchange factor which activates Rho GTPases. Strongly activates RHOA. Also strongly activates RHOB, weakly activates RHOC and RHOG and shows no effect on RHOD, RHOV, RHOQ or RAC1. Involved in regulation of cell shape and actin cytoskeletal organization. Plays a role in actin organization by generating a loss of actin stress fibers and the formation of membrane ruffles and filopodia. Required for SRC-induced podosome formation. Involved in positive regulation of immature dendritic cell migration. In Mus musculus (Mouse), this protein is Rho guanine nucleotide exchange factor 5.